The sequence spans 351 residues: MATTGRVLLLSPPSLSSHPEKLNAILKSHTRDKTDLQMLDRLAHGLVSLPESTYDIVLLLTGADNTLAETHSLLNRELIQRVVHSLRPAGKLRNRENKPWGLSDGNGSNANSSRRYNDDEQRFRNEVILAGLVFDDKGELLKPDIGAQQAIPLKLSRRRKEKEKTDTLASSANYSTNGTVGAPSSNGISAPIPAAKTTENNPVPPGVGFIDFSDDFGVPAEDDPQDSDEELIDEDELLDEDDMGRQIVQPPECRPKPGKRRRACKDCSCGLSQKLEAKDKAKRATADKALETMKLGSSELAEVDFTVQGKVGSCGNCSLGDAFRCDGCPYIGLPAFKPGEEVRLLNNDVQL.

Residues 1 to 151 (MATTGRVLLL…KPDIGAQQAI (151 aa)) form an N-terminal SAM-like domain region. 2 disordered regions span residues 93 to 118 (RNRE…RYND) and 157 to 186 (RRRK…PSSN). Polar residues-rich tracts occupy residues 105 to 114 (GNGSNANSSR) and 167 to 186 (TLAS…PSSN). The tract at residues 152-243 (PLKLSRRRKE…EDELLDEDDM (92 aa)) is linker. C253, C264, C267, and C269 together coordinate [2Fe-2S] cluster. The tract at residues 253–269 (CRPKPGKRRRACKDCSC) is fe-S binding site A. 4 residues coordinate [4Fe-4S] cluster: C314, C317, C325, and C328. 2 consecutive short sequence motifs (cx2C motif) follow at residues 314–317 (CGNC) and 325–328 (CDGC). Residues 314 to 328 (CGNCSLGDAFRCDGC) are fe-S binding site B.

It belongs to the anamorsin family. Monomer. Interacts with TAH18. Interacts with MIA40. It depends on [2Fe-2S] cluster as a cofactor. [4Fe-4S] cluster is required as a cofactor.

Its subcellular location is the cytoplasm. The protein resides in the mitochondrion intermembrane space. In terms of biological role, component of the cytosolic iron-sulfur (Fe-S) protein assembly (CIA) machinery required for the maturation of extramitochondrial Fe-S proteins. Part of an electron transfer chain functioning in an early step of cytosolic Fe-S biogenesis, facilitating the de novo assembly of a [4Fe-4S] cluster on the scaffold complex CFD1-NBP35. Electrons are transferred to DRE2 from NADPH via the FAD- and FMN-containing protein TAH18. TAH18-DRE2 are also required for the assembly of the diferric tyrosyl radical cofactor of ribonucleotide reductase (RNR), probably by providing electrons for reduction during radical cofactor maturation in the catalytic small subunit RNR2. This chain is Fe-S cluster assembly protein DRE2, found in Ajellomyces capsulatus (strain NAm1 / WU24) (Darling's disease fungus).